A 346-amino-acid chain; its full sequence is Very-long-chain 3-oxoacyl-CoA reductase (346 aa).

A helical transmembrane segment spans residues 19–39 (LIYGVLFVGVYKITTFTLSVG). V65, D119, N146, Y220, K224, V253, and S255 together coordinate NADP(+). Y220 serves as the catalytic Proton donor. Residue K224 is the Lowers pKa of active site Tyr of the active site.

The protein belongs to the short-chain dehydrogenases/reductases (SDR) family.

It localises to the endoplasmic reticulum membrane. The catalysed reaction is a very-long-chain (3R)-3-hydroxyacyl-CoA + NADP(+) = a very-long-chain 3-oxoacyl-CoA + NADPH + H(+). It functions in the pathway lipid metabolism; fatty acid biosynthesis. Component of the microsomal membrane bound fatty acid elongation system, which produces the 26-carbon very long-chain fatty acids (VLCFA) from palmitate. Catalyzes the reduction of the 3-ketoacyl-CoA intermediate that is formed in each cycle of fatty acid elongation. VLCFAs serve as precursors for ceramide and sphingolipids. The chain is Very-long-chain 3-oxoacyl-CoA reductase from Debaryomyces hansenii (strain ATCC 36239 / CBS 767 / BCRC 21394 / JCM 1990 / NBRC 0083 / IGC 2968) (Yeast).